Reading from the N-terminus, the 1481-residue chain is MQRSPLEKASVVSKLFFSWTRPILRKGYRQRLELSDIYQIPSADSADNLSEKLEREWDRELASKKNPKLINALRRCFFWRFMFYGILLYLGEVTKAVQPLLLGRIIASYDPDNKEERSIAIYLGIGLCLLFIVRTLLLHPAIFGLHHIGMQMRIAMFSLIYKKTLKLSSRVLDKISIGQLVSLLSNNLNKFDEGLALAHFVWIVPLQVALLMGLIWELLQASAFCGLGFLIVLALFQAGLGRMMMKYRDQRAGKINERLVITSEMIENIQSVKAYCWEEAMEKMIENLRQTELKLTRKAAYVRYFNSSAFFFSGFFVVFLSVLPYALIKGIVLRKIFTTISFCIVLRMAVTRQFPWAVQTWYDSLGAINKIQDFLQKQEYKTLEYNLTTTEVVMENVTAFWEEGFGELFEKAKQNNSNRKTSNDDDSLFFSNFSLLGTPVLKDINFKIERGQLLAVAGSTGAGKTSLLMMIMGELEPSEGKIKHSGRISFCSQFSWIMPGTIKENIIFGVSYDEYRYRSVINACQLEEDISKFAEKDNIVLGEGGITLSGGQRARISLARAVYKDADLYLLDSPFGYLDVLTEKEIFESCVCKLMANKTRILVTSKMEHLKKADKILILHEGSSYFYGTFSELQNLRPDFSSKLMGYDSFDQFSAERRNSILTETLRRFSLEGDAPVSWTETKKQSFKQTGEFGEKRKNSILNPINSIRKFSIVQKTPLQMNGIEEDSDEPLERRLSLVPDSEQGEVILPRISVISTGPTLQARRRQSVLNLMTHSVNQGQSIHRKTAASTRKVSLAPQANLTELDIYSRRLSQETGLEISEEINEEDLKECFFDDMESIPAVTTWNTYLRYITVHKSLIFVLIWCLVIFLAEVAASLVVLWFLGNTPPQDKGNSTYSRNNSYAVIITRTSSYYVFYIYVGVADTLLAMGFFRGLPLVHTLITVSKILHHKMLHSVLQAPMSTLNTLKAGGILNRFSKDIAILDDLLPLTIFDFIQLLLIVIGAIAVVAVLQPYIFVATVPVIVAFIMLRAYFLQTSQQLKQLESEGRSPIFTHLVTSLKGLWTLRAFGRQPYFETLFHKALNLHTANWFLYLSTLRWFQMRIEMIFVIFFIAVTFISILTTGEGEGTVGIILTLAMNIMSTLQWAVNSSIDVDSLMRSVSRVFKFIDMPTEEGKPTRSTKPYKNGQLSKVMVIENSHVKKDDIWPSGGQMTVKDLTAKYTEGGNPILENISFSISPGQRVGLLGRTGSGKSTLLSAFLRLLNTEGEIQIDGVSWDSITLQQWRKAFGVIPQKVFIFSGTFRKNLDPYEQWSDQEIWKVADEVGLRSVIEQFPGKLDFVLVDGGCVLSHGHKQLMCLARSVLSKAKILLLDEPSAHLDPVTYQIIRRTLKQAFADCTVILCEHRIEAMLECQQFLVIEENKVRQYDSIQKLLNERSLFRQAISPSDRVKLFPHRNSSKCKSQPQIAALKEETEEEVQDTRL.

Topologically, residues 1-77 are cytoplasmic; that stretch reads MQRSPLEKAS…KLINALRRCF (77 aa). Residues 78–98 form a helical membrane-spanning segment; it reads FWRFMFYGILLYLGEVTKAVQ. The region spanning 81 to 365 is the ABC transmembrane type-1 1 domain; it reads FMFYGILLYL…WAVQTWYDSL (285 aa). Over 99 to 122 the chain is Extracellular; that stretch reads PLLLGRIIASYDPDNKEERSIAIY. The chain crosses the membrane as a helical span at residues 123–146; the sequence is LGIGLCLLFIVRTLLLHPAIFGLH. At 147-195 the chain is on the cytoplasmic side; sequence HIGMQMRIAMFSLIYKKTLKLSSRVLDKISIGQLVSLLSNNLNKFDEGL. A helical membrane pass occupies residues 196–216; sequence ALAHFVWIVPLQVALLMGLIW. At 217–222 the chain is on the extracellular side; sequence ELLQAS. The helical transmembrane segment at 223-243 threads the bilayer; sequence AFCGLGFLIVLALFQAGLGRM. Residues 244–298 lie on the Cytoplasmic side of the membrane; it reads MMKYRDQRAGKINERLVITSEMIENIQSVKAYCWEEAMEKMIENLRQTELKLTRK. Residues 299–319 traverse the membrane as a helical segment; the sequence is AAYVRYFNSSAFFFSGFFVVF. Residues 320–339 are Extracellular-facing; that stretch reads LSVLPYALIKGIVLRKIFTT. Residues 340–358 form a helical membrane-spanning segment; that stretch reads ISFCIVLRMAVTRQFPWAV. The Cytoplasmic segment spans residues 359 to 858; sequence QTWYDSLGAI…YLRYITVHKS (500 aa). ATP is bound by residues Trp401, Ser434, 458 to 465, and Gln493; that span reads GSTGAGKT. The region spanning 423-646 is the ABC transporter 1 domain; it reads NDDDSLFFSN…RPDFSSKLMG (224 aa). Cys524 carries the S-palmitoyl cysteine lipid modification. Ser549 and Ser660 each carry phosphoserine. Positions 654–831 are disordered R region; it reads SAERRNSILT…EEINEEDLKE (178 aa). Ser670 carries the phosphoserine; by PKA modification. Ser686 is subject to Phosphoserine. A Glycyl lysine isopeptide (Lys-Gly) (interchain with G-Cter in ubiquitin) cross-link involves residue Lys688. Ser700 and Ser712 each carry phosphoserine. Position 717 is a phosphothreonine (Thr717). Ser737, Ser753, Ser768, Ser790, Ser795, and Ser813 each carry phosphoserine. Residues 859–879 traverse the membrane as a helical segment; it reads LIFVLIWCLVIFLAEVAASLV. The ABC transmembrane type-1 2 domain maps to 859–1155; the sequence is LIFVLIWCLV…AVNSSIDVDS (297 aa). Topologically, residues 880–918 are extracellular; the sequence is VLWFLGNTPPQDKGNSTYSRNNSYAVIITRTSSYYVFYI. N-linked (GlcNAc...) asparagine glycans are attached at residues Asn894 and Asn900. A discontinuously helical transmembrane segment spans residues 919 to 939; that stretch reads YVGVADTLLAMGFFRGLPLVH. The Cytoplasmic segment spans residues 940–990; sequence TLITVSKILHHKMLHSVLQAPMSTLNTLKAGGILNRFSKDIAILDDLLPLT. A helical transmembrane segment spans residues 991-1011; that stretch reads IFDFIQLLLIVIGAIAVVAVL. At 1012–1013 the chain is on the extracellular side; the sequence is QP. The chain crosses the membrane as a helical span at residues 1014–1034; sequence YIFVATVPVIVAFIMLRAYFL. At 1035–1095 the chain is on the cytoplasmic side; sequence QTSQQLKQLE…TANWFLYLST (61 aa). The helical transmembrane segment at 1096–1116 threads the bilayer; sequence LRWFQMRIEMIFVIFFIAVTF. Residues 1117–1130 are Extracellular-facing; that stretch reads ISILTTGEGEGTVG. The helical transmembrane segment at 1131–1151 threads the bilayer; sequence IILTLAMNIMSTLQWAVNSSI. Residues 1152 to 1481 lie on the Cytoplasmic side of the membrane; the sequence is DVDSLMRSVS…TEEEVQDTRL (330 aa). An ABC transporter 2 domain is found at 1211-1444; that stretch reads MTVKDLTAKY…RSLFRQAISP (234 aa). Residues Tyr1220 and 1245–1252 contribute to the ATP site; that span reads GRTGSGKS. Positions 1387-1481 are interaction with GORASP2; it reads RTLKQAFADC…TEEEVQDTRL (95 aa). Residue Cys1396 is the site of S-palmitoyl cysteine attachment. 2 positions are modified to phosphoserine: Ser1445 and Ser1457. The interval 1462 to 1481 is disordered; it reads QPQIAALKEETEEEVQDTRL. Residues 1471 to 1481 are compositionally biased toward acidic residues; the sequence is ETEEEVQDTRL. A PDZ-binding motif is present at residues 1479 to 1481; that stretch reads TRL.

It belongs to the ABC transporter superfamily. ABCC family. CFTR transporter (TC 3.A.1.202) subfamily. Monomer; does not require oligomerization for channel activity. May form oligomers in the membrane. Interacts with SLC26A3, SLC26A6 and NHERF1. Interacts with SHANK2. Interacts with MYO6. Interacts (via C-terminus) with GOPC (via PDZ domain); this promotes CFTR internalization and thereby decreases channel activity. Interacts with SLC4A7 through NHERF1. Found in a complex with MYO5B and RAB11A. Interacts with ANO1. Interacts with SLC26A8. Interacts with AHCYL1; the interaction increases CFTR activity. Interacts with CSE1L. The core-glycosylated form interacts with GORASP2 (via PDZ GRASP-type 1 domain) in respone to ER stress. Interacts with MARCHF2; the interaction leads to CFTR ubiqtuitination and degradation. Interacts with ADGRG2. Post-translationally, N-glycosylated. Phosphorylated; cAMP treatment promotes phosphorylation and activates the channel. Dephosphorylation decreases the ATPase activity (in vitro). Phosphorylation at PKA sites activates the channel. Phosphorylation at PKC sites enhances the response to phosphorylation by PKA. Phosphorylated by AMPK; this inhibits channel activity. In terms of processing, ubiquitinated, leading to its degradation in the lysosome. Deubiquitination by USP10 in early endosomes enhances its endocytic recycling to the cell membrane. Ubiquitinated by RNF185 during ER stress. Ubiquitinated by MARCHF2.

It is found in the apical cell membrane. The protein localises to the early endosome membrane. It localises to the cell membrane. Its subcellular location is the recycling endosome membrane. The protein resides in the endoplasmic reticulum membrane. It is found in the nucleus. The enzyme catalyses ATP + H2O + closed Cl(-) channel = ADP + phosphate + open Cl(-) channel.. It catalyses the reaction chloride(in) = chloride(out). It carries out the reaction hydrogencarbonate(in) = hydrogencarbonate(out). The catalysed reaction is ATP + H2O = ADP + phosphate + H(+). In terms of biological role, epithelial ion channel that plays an important role in the regulation of epithelial ion and water transport and fluid homeostasis. Mediates the transport of chloride ions across the cell membrane. Possesses an intrinsic ATPase activity and utilizes ATP to gate its channel; the passive flow of anions through the channel is gated by cycles of ATP binding and hydrolysis by the ATP-binding domains. The ion channel is also permeable to HCO(3)(-); selectivity depends on the extracellular chloride concentration. Exerts its function also by modulating the activity of other ion channels and transporters. Contributes to the regulation of the pH and the ion content of the epithelial fluid layer. Modulates the activity of the epithelial sodium channel (ENaC) complex, in part by regulating the cell surface expression of the ENaC complex. May regulate bicarbonate secretion and salvage in epithelial cells by regulating the transporter SLC4A7. Can inhibit the chloride channel activity of ANO1. Plays a role in the chloride and bicarbonate homeostasis during sperm epididymal maturation and capacitation. This is Cystic fibrosis transmembrane conductance regulator from Papio anubis (Olive baboon).